Here is a 350-residue protein sequence, read N- to C-terminus: Putative deoxyribonuclease-2 (350 aa).

Belongs to the DNase II family.

The sequence is that of Putative deoxyribonuclease-2 from Burkholderia pseudomallei (strain 1710b).